The sequence spans 300 residues: N-acetylmuramic acid 6-phosphate etherase (300 aa).

Positions 57–220 constitute an SIS domain; the sequence is VAAALRAGGR…STGAMIRIGK (164 aa). Glu85 acts as the Proton donor in catalysis. The active site involves Glu116.

This sequence belongs to the GCKR-like family. MurNAc-6-P etherase subfamily. Homodimer.

It catalyses the reaction N-acetyl-D-muramate 6-phosphate + H2O = N-acetyl-D-glucosamine 6-phosphate + (R)-lactate. The protein operates within amino-sugar metabolism; 1,6-anhydro-N-acetylmuramate degradation. It participates in amino-sugar metabolism; N-acetylmuramate degradation. It functions in the pathway cell wall biogenesis; peptidoglycan recycling. Specifically catalyzes the cleavage of the D-lactyl ether substituent of MurNAc 6-phosphate, producing GlcNAc 6-phosphate and D-lactate. Together with AnmK, is also required for the utilization of anhydro-N-acetylmuramic acid (anhMurNAc) either imported from the medium or derived from its own cell wall murein, and thus plays a role in cell wall recycling. This is N-acetylmuramic acid 6-phosphate etherase from Klebsiella aerogenes (Enterobacter aerogenes).